The sequence spans 873 residues: Protein SEY1 (873 aa).

Residues 1–21 (MVANGHFAGSADGQDSSSYEH) are disordered. Residues 1-749 (MVANGHFAGS…KRSAIGGITQ (749 aa)) are Cytoplasmic-facing. The 259-residue stretch at 49 to 307 (GFNYHLISVF…IPADGFAVYA (259 aa)) folds into the GB1/RHD3-type G domain. 59-66 (GSQSTGKS) contributes to the GTP binding site. The stretch at 482–506 (SNYQQELSLYQKDLERTSGQLRRDE) forms a coiled coil. The disordered stretch occupies residues 676–703 (LDKWIGHTPSSATPADEEDLTPIGGVDD). Acidic residues predominate over residues 690-703 (ADEEDLTPIGGVDD). The helical transmembrane segment at 750-770 (VPLYFYGLLFALGWNEILAVL) threads the bilayer. Residues 771–773 (RNP) are Lumenal-facing. Residues 774–794 (VYFLLLFVCAIGAYITYQLNL) traverse the membrane as a helical segment. At 795 to 873 (WGPIIKMTEA…EDVDDDDDDF (79 aa)) the chain is on the cytoplasmic side. The tract at residues 828–873 (RQAMAMSGARNATEEHEMSRLSRKPAERGGRKNRADEDVDDDDDDF) is disordered. The span at 839 to 863 (ATEEHEMSRLSRKPAERGGRKNRAD) shows a compositional bias: basic and acidic residues. Residues 864 to 873 (EDVDDDDDDF) are compositionally biased toward acidic residues.

It belongs to the TRAFAC class dynamin-like GTPase superfamily. GB1/RHD3 GTPase family. RHD3 subfamily.

Its subcellular location is the endoplasmic reticulum membrane. Cooperates with the reticulon proteins and tubule-shaping DP1 family proteins to generate and maintain the structure of the tubular endoplasmic reticulum network. Has GTPase activity, which is required for its function in ER organization. This is Protein SEY1 from Ajellomyces capsulatus (strain G186AR / H82 / ATCC MYA-2454 / RMSCC 2432) (Darling's disease fungus).